Here is a 629-residue protein sequence, read N- to C-terminus: MGYNIGSYDVIVIGAGHAGCEAGLAAARMGSKTLMLTINLDMVAFMPCNPSVGGPAKGIVVREIDALGGEMGRNIDKTHIQMRMLNTGKGPAVRALRAQADKFAYQHELKKTIEETPNLTLFQGMVERLIVEEGVCKGVVTQAGAEYTAKTVVITTGTFLRGEIIMGDLKYSSGPNNQQPSITLSEHLEELGFDLVRFKTGTPPRVNSNTIDYSKTEIQPGDDKPRAFSFETTKFIMDQIPCWLTYTSTETHRLIDENLHRSAMYSGMIKGTGPRYCPSIEDKVVRFNDKPRHQIFLEPEGRNTQEVYVQGLSTSLPEDVQRDMLRTIPGLENVEMMRTGYAIEYDAIVPTQLWPTLETKKIKNLYTAGQINGTSGYEEAAGQGLMAGINAACRSLGKKEVVLGREDAYIGVLIDDLVTKGTNEPYRLLTSRAEYRLLLRHDNADLRLTEVGREIGLIKEERYERFTNKKLQIEQEKERLSSIIIKPRPEVQELIRNIGGSELKDGIRASDLLRRPEMAYEHIHLLVPSEVELSDEVKEQVEIQIKYEGYIEKSLQQVERMKKMESKKIPVDIDYDAISSLASEARQKLKDVRPLSMGQASRISGVNPADISILLVYIEQGKIARVSNQ.

FAD is bound by residues 14 to 19 (GAGHAG), V126, and S181. 273–287 (GPRYCPSIEDKVVRF) provides a ligand contact to NAD(+). Q370 contributes to the FAD binding site.

It belongs to the MnmG family. As to quaternary structure, homodimer. Heterotetramer of two MnmE and two MnmG subunits. FAD is required as a cofactor.

It localises to the cytoplasm. Its function is as follows. NAD-binding protein involved in the addition of a carboxymethylaminomethyl (cmnm) group at the wobble position (U34) of certain tRNAs, forming tRNA-cmnm(5)s(2)U34. This Bacillus cereus (strain ATCC 14579 / DSM 31 / CCUG 7414 / JCM 2152 / NBRC 15305 / NCIMB 9373 / NCTC 2599 / NRRL B-3711) protein is tRNA uridine 5-carboxymethylaminomethyl modification enzyme MnmG.